The chain runs to 66 residues: Large ribosomal subunit protein bL33 (66 aa).

This sequence belongs to the bacterial ribosomal protein bL33 family.

This Synechococcus sp. (strain CC9311) protein is Large ribosomal subunit protein bL33.